A 1245-amino-acid chain; its full sequence is ATP-dependent helicase/deoxyribonuclease subunit B (1245 aa).

The interval 737 to 758 (WDDQNNAPTTDLPDRPNPRASE) is disordered. The span at 748–758 (LPDRPNPRASE) shows a compositional bias: basic and acidic residues.

Belongs to the helicase family. AddB/RexB type 2 subfamily. Heterodimer of AddA and RexB. It depends on Mg(2+) as a cofactor.

The heterodimer acts as both an ATP-dependent DNA helicase and an ATP-dependent, dual-direction single-stranded exonuclease. Recognizes the chi site generating a DNA molecule suitable for the initiation of homologous recombination. This subunit has 5' -&gt; 3' nuclease activity but not helicase activity. This is ATP-dependent helicase/deoxyribonuclease subunit B from Limosilactobacillus fermentum (strain NBRC 3956 / LMG 18251) (Lactobacillus fermentum).